The following is a 171-amino-acid chain: uncharacterized protein (171 aa).

The protein to A.aeolicus aq_616.

This is an uncharacterized protein from Aquifex aeolicus (strain VF5).